The primary structure comprises 529 residues: MQQHRPVRRALLSVSDKAGILEFAQALSQRGVELLSTGGTARLLADAGLPVTEVSDYTGFPEMMDGRVKTLHPKVHGGILGRRGQDDAIMTEHGISPIDMVVVNLYPFAQTVSRADCSLEDAVENIDIGGPTMVRSAAKNHKDVAIVVKSSDYQAIIAELDANECSLTLATRFDLAIKAFEHTAAYDSMIANYFGSMVPAYHGETTEPAGRFPRTLNLNFIKKQDMRYGENSHQQAAFYIEEHVGEASVATAQQVQGKALSYNNIADTDAALECVKEFDQPACVIVKHANPCGVATGSAIIEAYERAYQTDPTSAFGGIIAFNRELDEATARAIISRQFVEVIIAPSASDAALKITAAKQNVRVLTCGQWQQRQTGLDFKRVNGGLLVQDRDLGMVSDSQLRVVSKRQPSEQELRDALFCWKVAKFVKSNAIVYARDNMTIGIGAGQMSRVYSAKIAAIKAADEGLEVTGSSMASDAFFPFRDGIDAAAAVGITCVIQPGGSIRDDEVIAAADEHGIAMIFTGMRHFRH.

The region spanning 1 to 148 is the MGS-like domain; sequence MQQHRPVRRA…KNHKDVAIVV (148 aa).

It belongs to the PurH family.

It carries out the reaction (6R)-10-formyltetrahydrofolate + 5-amino-1-(5-phospho-beta-D-ribosyl)imidazole-4-carboxamide = 5-formamido-1-(5-phospho-D-ribosyl)imidazole-4-carboxamide + (6S)-5,6,7,8-tetrahydrofolate. The enzyme catalyses IMP + H2O = 5-formamido-1-(5-phospho-D-ribosyl)imidazole-4-carboxamide. It participates in purine metabolism; IMP biosynthesis via de novo pathway; 5-formamido-1-(5-phospho-D-ribosyl)imidazole-4-carboxamide from 5-amino-1-(5-phospho-D-ribosyl)imidazole-4-carboxamide (10-formyl THF route): step 1/1. It functions in the pathway purine metabolism; IMP biosynthesis via de novo pathway; IMP from 5-formamido-1-(5-phospho-D-ribosyl)imidazole-4-carboxamide: step 1/1. In Erwinia tasmaniensis (strain DSM 17950 / CFBP 7177 / CIP 109463 / NCPPB 4357 / Et1/99), this protein is Bifunctional purine biosynthesis protein PurH.